Consider the following 305-residue polypeptide: UDP-N-acetylenolpyruvoylglucosamine reductase (305 aa).

Residues 33–198 (RVGGPAQVLF…TGGTFRGRRA (166 aa)) enclose the FAD-binding PCMH-type domain. Residue Arg-178 is part of the active site. The active-site Proton donor is Ser-227. Residue Glu-297 is part of the active site.

It belongs to the MurB family. FAD serves as cofactor.

Its subcellular location is the cytoplasm. It carries out the reaction UDP-N-acetyl-alpha-D-muramate + NADP(+) = UDP-N-acetyl-3-O-(1-carboxyvinyl)-alpha-D-glucosamine + NADPH + H(+). It participates in cell wall biogenesis; peptidoglycan biosynthesis. In terms of biological role, cell wall formation. The polypeptide is UDP-N-acetylenolpyruvoylglucosamine reductase (Nitrobacter hamburgensis (strain DSM 10229 / NCIMB 13809 / X14)).